The following is a 92-amino-acid chain: DNA/RNA-binding protein Alba (92 aa).

Lysine 11 carries the post-translational modification N6-acetyllysine.

Belongs to the histone-like Alba family. Post-translationally, acetylated. Acetylation at Lys-11 decreases DNA-binding affinity.

The protein resides in the cytoplasm. Its subcellular location is the chromosome. Binds double-stranded DNA tightly but without sequence specificity. Involved in DNA compaction. This is DNA/RNA-binding protein Alba from Pyrobaculum islandicum (strain DSM 4184 / JCM 9189 / GEO3).